The chain runs to 426 residues: UDP-N-acetylglucosamine 1-carboxyvinyltransferase (426 aa).

22 to 23 (KN) is a binding site for phosphoenolpyruvate. Arg93 is a UDP-N-acetyl-alpha-D-glucosamine binding site. Catalysis depends on Asp117, which acts as the Proton donor. The UDP-N-acetyl-alpha-D-glucosamine site is built by Asp312 and Met334.

It belongs to the EPSP synthase family. MurA subfamily.

The protein resides in the cytoplasm. The catalysed reaction is phosphoenolpyruvate + UDP-N-acetyl-alpha-D-glucosamine = UDP-N-acetyl-3-O-(1-carboxyvinyl)-alpha-D-glucosamine + phosphate. It participates in cell wall biogenesis; peptidoglycan biosynthesis. In terms of biological role, cell wall formation. Adds enolpyruvyl to UDP-N-acetylglucosamine. This chain is UDP-N-acetylglucosamine 1-carboxyvinyltransferase, found in Treponema denticola (strain ATCC 35405 / DSM 14222 / CIP 103919 / JCM 8153 / KCTC 15104).